The sequence spans 109 residues: SVAFSRAVFAEFLATLLFVFFGLGSALNWPQALPSVLQIAMAFGLGIGTLVQALGHVSGAHINPAVTVACLVGCHVSFLRAAFYVAAQLLGAVAGAALLHEITPPHVRG.

Over 1–6 (SVAFSR) the chain is Cytoplasmic. The helical transmembrane segment at 7-27 (AVFAEFLATLLFVFFGLGSAL) threads the bilayer. The Extracellular segment spans residues 28–35 (NWPQALPS). A helical membrane pass occupies residues 36-54 (VLQIAMAFGLGIGTLVQAL). At 55–59 (GHVSG) the chain is on the cytoplasmic side. Residues 60 to 69 (AHINPAVTVA) constitute an intramembrane region (discontinuously helical). The NPA 1 motif lies at 63–65 (NPA). Topologically, residues 70–80 (CLVGCHVSFLR) are cytoplasmic. Residues 81 to 102 (AAFYVAAQLLGAVAGAALLHEI) form a helical membrane-spanning segment. Over 103 to 109 (TPPHVRG) the chain is Extracellular.

This sequence belongs to the MIP/aquaporin (TC 1.A.8) family. Homotetramer. Post-translationally, serine phosphorylation is necessary and sufficient for expression at the apical membrane. Endocytosis is not phosphorylation-dependent. N-glycosylated.

Its subcellular location is the apical cell membrane. It is found in the basolateral cell membrane. The protein resides in the cell membrane. The protein localises to the cytoplasmic vesicle membrane. It localises to the golgi apparatus. Its subcellular location is the trans-Golgi network membrane. The catalysed reaction is H2O(in) = H2O(out). It carries out the reaction glycerol(in) = glycerol(out). In terms of biological role, forms a water-specific channel that provides the plasma membranes of renal collecting duct with high permeability to water, thereby permitting water to move in the direction of an osmotic gradient. Plays an essential role in renal water homeostasis. Could also be permeable to glycerol. The polypeptide is Aquaporin-2 (Canis lupus familiaris (Dog)).